We begin with the raw amino-acid sequence, 582 residues long: 15-cis-phytoene desaturase, chloroplastic/chromoplastic (582 aa).

Residues 1–110 (MPQIGLVSAV…FRSSPRPTKP (110 aa)) constitute a chloroplast and chromoplast transit peptide. FAD is bound by residues 140 to 141 (EA), Lys148, 165 to 166 (HI), and Tyr171. Arg306 is a substrate binding site. Positions 348 and 537 each coordinate FAD. Ala545 contacts substrate. Met547 contributes to the FAD binding site.

It belongs to the carotenoid/retinoid oxidoreductase family. In terms of assembly, homotetramer. The cofactor is FAD.

The protein localises to the plastid. It localises to the chloroplast. Its subcellular location is the chromoplast. It is found in the membrane. It carries out the reaction 2 a plastoquinone + 15-cis-phytoene = 9,9',15-tri-cis-zeta-carotene + 2 a plastoquinol. It functions in the pathway carotenoid biosynthesis; lycopene biosynthesis. Inhibited by the herbicides metflurazon, difunone, fluridone and diflufenican. In terms of biological role, converts phytoene into zeta-carotene via the intermediary of phytofluene by the symmetrical introduction of two double bonds at the C-11 and C-11' positions of phytoene with a concomitant isomerization of two neighboring double bonds at the C9 and C9' positions from trans to cis. The chain is 15-cis-phytoene desaturase, chloroplastic/chromoplastic (PDS) from Capsicum annuum (Capsicum pepper).